A 77-amino-acid chain; its full sequence is DNA-directed RNA polymerase subunit epsilon (77 aa).

This sequence belongs to the RNA polymerase subunit epsilon family. RNAP is composed of a core of 2 alpha, a beta and a beta' subunit. The core is associated with a delta subunit, and at least one of epsilon or omega. When a sigma factor is associated with the core the holoenzyme is formed, which can initiate transcription.

It carries out the reaction RNA(n) + a ribonucleoside 5'-triphosphate = RNA(n+1) + diphosphate. In terms of biological role, a non-essential component of RNA polymerase (RNAP). The chain is DNA-directed RNA polymerase subunit epsilon from Streptococcus pneumoniae serotype 19F (strain G54).